The following is a 589-amino-acid chain: Coiled-coil domain-containing protein 22 homolog (589 aa).

Coiled coils occupy residues 287–426 (KTPL…LQTK) and 523–589 (CEEL…TSRQ). The tract at residues 568-589 (EMQNESQRLEESIRRMEVTSRQ) is disordered. Over residues 574-589 (QRLEESIRRMEVTSRQ) the composition is skewed to basic and acidic residues.

Belongs to the CCDC22 family.

The protein is Coiled-coil domain-containing protein 22 homolog of Aedes aegypti (Yellowfever mosquito).